A 333-amino-acid chain; its full sequence is Adenosine deaminase (333 aa).

His-12 and His-14 together coordinate Zn(2+). The substrate site is built by His-14, Asp-16, and Gly-170. Position 197 (His-197) interacts with Zn(2+). Glu-200 (proton donor) is an active-site residue. Asp-278 is a Zn(2+) binding site. Residue Asp-279 participates in substrate binding.

Belongs to the metallo-dependent hydrolases superfamily. Adenosine and AMP deaminases family. Adenosine deaminase subfamily. Requires Zn(2+) as cofactor.

The catalysed reaction is adenosine + H2O + H(+) = inosine + NH4(+). It carries out the reaction 2'-deoxyadenosine + H2O + H(+) = 2'-deoxyinosine + NH4(+). Its function is as follows. Catalyzes the hydrolytic deamination of adenosine and 2-deoxyadenosine. This Escherichia coli (strain SMS-3-5 / SECEC) protein is Adenosine deaminase.